Consider the following 356-residue polypeptide: Glycerol-1-phosphate dehydrogenase [NAD(P)+] (356 aa).

Residues G103–D107 and T125–S128 each bind NAD(+). D130 provides a ligand contact to substrate. S134 serves as a coordination point for NAD(+). Residue D177 coordinates substrate. The Zn(2+) site is built by D177 and H257. A substrate-binding site is contributed by H261. H273 contacts Zn(2+).

The protein belongs to the glycerol-1-phosphate dehydrogenase family. It depends on Zn(2+) as a cofactor.

It is found in the cytoplasm. It catalyses the reaction sn-glycerol 1-phosphate + NAD(+) = dihydroxyacetone phosphate + NADH + H(+). The enzyme catalyses sn-glycerol 1-phosphate + NADP(+) = dihydroxyacetone phosphate + NADPH + H(+). Its pathway is membrane lipid metabolism; glycerophospholipid metabolism. In terms of biological role, catalyzes the NAD(P)H-dependent reduction of dihydroxyacetonephosphate (DHAP or glycerone phosphate) to glycerol 1-phosphate (G1P). The G1P thus generated is used as the glycerophosphate backbone of phospholipids in the cellular membranes of Archaea. The protein is Glycerol-1-phosphate dehydrogenase [NAD(P)+] of Methanosarcina barkeri (strain Fusaro / DSM 804).